A 196-amino-acid chain; its full sequence is Probable nicotinate-nucleotide adenylyltransferase (196 aa).

Belongs to the NadD family.

It carries out the reaction nicotinate beta-D-ribonucleotide + ATP + H(+) = deamido-NAD(+) + diphosphate. It participates in cofactor biosynthesis; NAD(+) biosynthesis; deamido-NAD(+) from nicotinate D-ribonucleotide: step 1/1. Catalyzes the reversible adenylation of nicotinate mononucleotide (NaMN) to nicotinic acid adenine dinucleotide (NaAD). This is Probable nicotinate-nucleotide adenylyltransferase from Thermotoga sp. (strain RQ2).